A 1712-amino-acid chain; its full sequence is Latent-transforming growth factor beta-binding protein 1 (1712 aa).

The first 23 residues, 1 to 23 (MAGAWLRWGLLLWAGLLAWSAHG), serve as a signal peptide directing secretion. The disordered stretch occupies residues 65-118 (TAASSRALAGPPAERTRRTSQPGGAALPGLRSPLPPEPARPGGPSRQLHSKAGA). The EGF-like 1 domain occupies 181–213 (TKPSCVPPCQNGGMCLRPQLCVCKPGSKGKACE). Cystine bridges form between cysteine 185–cysteine 195, cysteine 189–cysteine 201, and cysteine 203–cysteine 212. 2 N-linked (GlcNAc...) asparagine glycosylation sites follow: asparagine 339 and asparagine 370. Residues 391 to 423 (RVVICHLPCMNGGQCSSRDKCQCPPNFTGKLCQ) enclose the EGF-like 2 domain. Cystine bridges form between cysteine 395–cysteine 405, cysteine 399–cysteine 411, cysteine 413–cysteine 422, cysteine 551–cysteine 573, cysteine 560–cysteine 586, and cysteine 574–cysteine 589. Asparagine 416 carries N-linked (GlcNAc...) asparagine glycosylation. Residues 549 to 601 (GRCFQETIGSQCGKALPGLSKQEDCCGTVGTSWGFNKCQKCPKKQSYHGYTQM) enclose the TB 1 domain. Asparagine 612 is a glycosylation site (N-linked (GlcNAc...) asparagine). Residues 618–658 (DINECQLQGVCPNGECLNTMGSYRCSCKMGFGPDPTFSSCV) form the EGF-like 3; calcium-binding domain. Disulfide bonds link cysteine 622–cysteine 633, cysteine 628–cysteine 642, cysteine 644–cysteine 657, cysteine 671–cysteine 694, cysteine 681–cysteine 706, cysteine 695–cysteine 709, and cysteine 696–cysteine 721. The O-linked (Glc) serine glycan is linked to serine 639. In terms of domain architecture, TB 2 spans 669–721 (GPCYRLVSPGRHCMHPLSVHLTKQICCCSVGKAWGPHCEKCPLPGTAAFKEIC). The interval 753–799 (NTQPVAKSTHPPPLPAKEEPVEALTSSWEHGPRGAEPEVVTAPPEKE) is disordered. Residues threonine 761 and threonine 793 are each glycosylated (O-linked (GalNAc...) threonine). The EGF-like 4; calcium-binding domain maps to 865 to 906 (EINECTVNPDICGAGHCINLPVRYTCICYEGYKFSEQLRKCV). 37 disulfides stabilise this stretch: cysteine 869–cysteine 881, cysteine 876–cysteine 890, cysteine 892–cysteine 905, cysteine 911–cysteine 923, cysteine 918–cysteine 932, cysteine 934–cysteine 947, cysteine 953–cysteine 964, cysteine 959–cysteine 973, cysteine 976–cysteine 988, cysteine 994–cysteine 1005, cysteine 1000–cysteine 1014, cysteine 1017–cysteine 1028, cysteine 1034–cysteine 1045, cysteine 1040–cysteine 1054, cysteine 1056–cysteine 1069, cysteine 1075–cysteine 1086, cysteine 1081–cysteine 1095, cysteine 1097–cysteine 1110, cysteine 1116–cysteine 1127, cysteine 1122–cysteine 1136, cysteine 1138–cysteine 1151, cysteine 1157–cysteine 1169, cysteine 1164–cysteine 1178, cysteine 1180–cysteine 1192, cysteine 1198–cysteine 1210, cysteine 1204–cysteine 1219, cysteine 1221–cysteine 1234, cysteine 1240–cysteine 1252, cysteine 1246–cysteine 1261, cysteine 1263–cysteine 1276, cysteine 1282–cysteine 1294, cysteine 1289–cysteine 1303, cysteine 1305–cysteine 1319, cysteine 1340–cysteine 1363, cysteine 1350–cysteine 1375, cysteine 1364–cysteine 1380, and cysteine 1365–cysteine 1392. Residues 907–948 (DIDECAQVRHLCSQGRCENTEGSFLCVCPAGFMASEEGTNCI) form the EGF-like 5; calcium-binding domain. The O-linked (Glc) serine glycan is linked to serine 929. An EGF-like 6; calcium-binding domain is found at 949–989 (DVDECLRPDMCRDGRCINTAGAFRCEYCDSGYRMSRRGYCE). Asparagine 966 carries the post-translational modification (3R)-3-hydroxyasparagine. The EGF-like 7; calcium-binding domain occupies 990 to 1029 (DIDECLKPSTCPEEQCVNTPGSYQCVPCTEGFRGWNGQCL). Serine 1011 carries O-linked (Glc) serine glycosylation. An EGF-like 8; calcium-binding domain is found at 1030–1070 (DVDECLQPKVCTNGSCTNLEGSYMCSCHRGYSPTPDHRHCQ). N-linked (GlcNAc...) asparagine glycosylation is present at asparagine 1042. A glycan (O-linked (Glc) serine) is linked at serine 1051. Positions 1071 to 1111 (DIDECQQGNLCMNGQCRNTDGSFRCTCGQGYQLSAAKDQCE) constitute an EGF-like 9; calcium-binding domain. The EGF-like 10; calcium-binding domain occupies 1112-1152 (DIDECEHHHLCSHGQCRNTEGSFQCVCNQGYRASVLGDHCE). (3R)-3-hydroxyasparagine is present on asparagine 1129. An O-linked (Glc) serine glycan is attached at serine 1133. An EGF-like 11; calcium-binding domain is found at 1153-1193 (DINECLEDSSVCQGGDCINTAGSYDCTCPDGFQLNDNKGCQ). In terms of domain architecture, EGF-like 12; calcium-binding spans 1194–1235 (DINECAQPGLCGSHGECLNTQGSFHCVCEQGFSISADGRTCE). Residue serine 1216 is glycosylated (O-linked (Glc) serine). Residues 1236–1277 (DIDECVNNTVCDSHGFCDNTAGSFRCLCYQGFQAPQDGQGCV) form the EGF-like 13; calcium-binding domain. Asparagine 1242 carries an N-linked (GlcNAc...) asparagine glycan. The region spanning 1278–1320 (DVNECELLSGVCGEAFCENVEGSFLCVCADENQEYSPMTGQCR) is the EGF-like 14; calcium-binding domain. The segment at 1335-1402 (EEKKECYYNL…PRGKGLVPAG (68 aa)) is 8-Cys3 region. Residues 1338 to 1392 (KECYYNLNDASLCDNVLAPNVTKQECCCTSGAGWGDNCEIFPCPVQGTAEFTEMC) form the TB 3 domain. Residue asparagine 1357 is glycosylated (N-linked (GlcNAc...) asparagine). Residue serine 1405 is modified to Phosphoserine. The region spanning 1415-1457 (DADECLLFGEEICKNGYCLNTQPGYECYCKQGTYYDPVKLQCF) is the EGF-like 15; calcium-binding domain. Disulfide bonds link cysteine 1419–cysteine 1432, cysteine 1427–cysteine 1441, cysteine 1443–cysteine 1456, cysteine 1462–cysteine 1473, cysteine 1468–cysteine 1482, cysteine 1484–cysteine 1497, cysteine 1517–cysteine 1541, cysteine 1527–cysteine 1553, cysteine 1542–cysteine 1556, and cysteine 1543–cysteine 1568. The EGF-like 16; calcium-binding domain maps to 1458 to 1498 (DMDECQDPNSCIDGQCVNTEGSYNCFCTHPMVLDASEKRCV). An O-linked (Glc) serine glycan is attached at serine 1479. The interval 1498–1712 (VQPTESNEQI…LNLDKESDLE (215 aa)) is C-terminal domain. Positions 1515–1568 (DLCWEHLSEEYVCSRPLVGKQTTYTECCCLYGEAWGMQCALCPMKDSDDYAQLC) constitute a TB 4 domain. Phosphoserine is present on residues serine 1588 and serine 1607. The EGF-like 17 domain maps to 1612-1652 (QAEECGILNGCENGRCVRVQEGYTCDCFDGYHLDMAKMTCV). Disulfide bonds link cysteine 1616–cysteine 1627, cysteine 1622–cysteine 1636, cysteine 1638–cysteine 1651, cysteine 1657–cysteine 1672, cysteine 1667–cysteine 1681, and cysteine 1683–cysteine 1696. In terms of domain architecture, EGF-like 18; calcium-binding spans 1653 to 1697 (DVNECSELNNRMSLCKNAKCINTEGSYKCLCLPGYIPSDKPNYCT). O-linked (Glc) serine glycosylation occurs at serine 1678.

This sequence belongs to the LTBP family. In terms of assembly, interacts with TGFB1; associates via disulfide bonds with the Latency-associated peptide chain (LAP) regulatory chain of TGFB1, leading to regulate activation of TGF-beta-1. LTBP1 does not bind directly to TGF-beta-1, the active chain of TGFB1. Interacts (via C-terminal domain) with FBN1 (via N-terminal domain). Interacts with FBN2. Interacts with ADAMTSL2. Interacts with EFEMP2. In terms of processing, contains hydroxylated asparagine residues. Two intrachain disulfide bonds from the TB3 domain are rearranged upon TGFB1 binding, and form interchain bonds with TGFB1 propeptide, anchoring it to the extracellular matrix. Post-translationally, O-glycosylated on serine residues by POGLUT2 and POGLUT3.

The protein resides in the secreted. It localises to the extracellular space. Its subcellular location is the extracellular matrix. Key regulator of transforming growth factor beta (TGFB1, TGFB2 and TGFB3) that controls TGF-beta activation by maintaining it in a latent state during storage in extracellular space. Associates specifically via disulfide bonds with the Latency-associated peptide (LAP), which is the regulatory chain of TGF-beta, and regulates integrin-dependent activation of TGF-beta. Outcompeted by LRRC32/GARP for binding to LAP regulatory chain of TGF-beta. This chain is Latent-transforming growth factor beta-binding protein 1, found in Mus musculus (Mouse).